The chain runs to 194 residues: Probable thymidylate kinase (194 aa).

9-16 (GIDGVGKS) serves as a coordination point for ATP.

The protein belongs to the thymidylate kinase family.

The enzyme catalyses dTMP + ATP = dTDP + ADP. The protein is Probable thymidylate kinase of Methanopyrus kandleri (strain AV19 / DSM 6324 / JCM 9639 / NBRC 100938).